The chain runs to 239 residues: tRNA (guanine-N(7)-)-methyltransferase (239 aa).

Glu69, Glu94, Asp121, and Asp144 together coordinate S-adenosyl-L-methionine. Residue Asp144 is part of the active site. Substrate is bound at residue Lys148. The interval 150–155 (RHNKRR) is interaction with RNA. Substrate-binding positions include Asp180 and 217–220 (TKFE).

The protein belongs to the class I-like SAM-binding methyltransferase superfamily. TrmB family. As to quaternary structure, monomer.

The enzyme catalyses guanosine(46) in tRNA + S-adenosyl-L-methionine = N(7)-methylguanosine(46) in tRNA + S-adenosyl-L-homocysteine. It participates in tRNA modification; N(7)-methylguanine-tRNA biosynthesis. Its function is as follows. Catalyzes the formation of N(7)-methylguanine at position 46 (m7G46) in tRNA. This is tRNA (guanine-N(7)-)-methyltransferase from Yersinia pseudotuberculosis serotype I (strain IP32953).